The sequence spans 929 residues: Protocadherin gamma-B3 (929 aa).

The N-terminal stretch at 1–30 (MGNSSGWRGPAGQRRMLFLFLLSLLDQALS) is a signal peptide. Cadherin domains are found at residues 31–133 (EPIR…PPTF), 134–242 (SQNI…PPVF), 243–347 (TQDM…APEI), 348–452 (TLAS…VPVF), 453–562 (HQAS…APLV), and 570–675 (EGSA…QPDL). The Extracellular segment spans residues 31–691 (EPIRYAIPEE…SDPQAELQFH (661 aa)). The N-linked (GlcNAc...) asparagine glycan is linked to Asn-136. N-linked (GlcNAc...) asparagine glycans are attached at residues Asn-419 and Asn-545. A helical membrane pass occupies residues 692-712 (LVVALALISVLFLLAVILAIS). Topologically, residues 713–929 (LRLRCSSRPA…KKKSGKKEKK (217 aa)) are cytoplasmic. Disordered regions lie at residues 791–838 (NDNP…WPNN) and 899–929 (ATLTNAAGKRDGKAPAGGNGNKKKSGKKEKK). Residues 919 to 929 (NKKKSGKKEKK) are compositionally biased toward basic residues.

The protein localises to the cell membrane. In terms of biological role, potential calcium-dependent cell-adhesion protein. May be involved in the establishment and maintenance of specific neuronal connections in the brain. The protein is Protocadherin gamma-B3 (PCDHGB3) of Homo sapiens (Human).